The sequence spans 97 residues: Glutamyl-tRNA(Gln) amidotransferase subunit C (97 aa).

The protein belongs to the GatC family. Heterotrimer of A, B and C subunits.

The catalysed reaction is L-glutamyl-tRNA(Gln) + L-glutamine + ATP + H2O = L-glutaminyl-tRNA(Gln) + L-glutamate + ADP + phosphate + H(+). The enzyme catalyses L-aspartyl-tRNA(Asn) + L-glutamine + ATP + H2O = L-asparaginyl-tRNA(Asn) + L-glutamate + ADP + phosphate + 2 H(+). Allows the formation of correctly charged Asn-tRNA(Asn) or Gln-tRNA(Gln) through the transamidation of misacylated Asp-tRNA(Asn) or Glu-tRNA(Gln) in organisms which lack either or both of asparaginyl-tRNA or glutaminyl-tRNA synthetases. The reaction takes place in the presence of glutamine and ATP through an activated phospho-Asp-tRNA(Asn) or phospho-Glu-tRNA(Gln). The chain is Glutamyl-tRNA(Gln) amidotransferase subunit C from Saccharolobus solfataricus (strain ATCC 35092 / DSM 1617 / JCM 11322 / P2) (Sulfolobus solfataricus).